We begin with the raw amino-acid sequence, 146 residues long: Large ribosomal subunit protein uL15 (146 aa).

Positions 1 to 54 (MTLRLNELAPAEGAKREHRRLGRGIGSGVGKTGGRGIKGQKSRKSGGVRPGFEG) are disordered. Positions 23–37 (RGIGSGVGKTGGRGI) are enriched in gly residues.

This sequence belongs to the universal ribosomal protein uL15 family. As to quaternary structure, part of the 50S ribosomal subunit.

Binds to the 23S rRNA. The protein is Large ribosomal subunit protein uL15 of Acinetobacter baumannii (strain SDF).